A 730-amino-acid chain; its full sequence is MSWDDGKHTKVKRVQLTFDDVIRSIEVEYDGTSLKSQPRGTAGTKIDGFTLSSDEYITEVNGYYKTTFSGEVITSLTFKTNKRTYGTYGNKTSSYFSVAAPKDNQIVGFLGSSSHALNSIDAHFAPAPPPGSTGAKPGASGIGSDSGSIGSAGTNPGADGTRETEKNAGGSKPSSGSAGTNPGASAVGNGETEKNAGGSKPSSGSAGTNPGASAGGNGETEKNVGGSKPSSGKAGTNPGANAGGNGGTEKNAGGSKSSSGSARTNPGASAGGNGETVSNIGDTESNAGGSKSNDGANNGASGIESNAGSTGTNFGAGGTGGIGDTESDAGGSKTNSGNGGTNDGASGIGSNDGSTGTNPGAGGGTDSNIEGTENNVGGKETNPGASGIGNSDGSTGTSPEGTESNADGTKTNTGGKESNTGSESNTNSSPQKLEAQGGNGGNQWDDGTDHDGVMKIHVAVGGLGIEQIRFDYVKNGQLKEGPFHGVKGRGGTSTIEISHPDEYLVSVEGLYDSSNIIQGIQFQSNKHTSQYFGYEYYGDGTQFSLQVNEKKIIGFHGFADSHLNSLGAYFVPISSSSSSLTPPPNKVKAQGGSYGETFDDGAFDHVRKVYVGQGDSGVAYVKFDYEKDGKKETQEHGKMTLSGTEEFEVDSDDYITSMEVYVDKVYGYKSEIVIALTFKTFKGETSPRFGIETENKYEVKDGKGGKLAGFHGKASDVLYAIGAYFIPAAN.

The Jacalin-type lectin 1 domain maps to 1 to 126 (MSWDDGKHTK…LNSIDAHFAP (126 aa)). The disordered stretch occupies residues 121 to 450 (DAHFAPAPPP…GNQWDDGTDH (330 aa)). Low complexity-rich tracts occupy residues 138–153 (GASG…GSAG), 168–179 (AGGSKPSSGSAG), 196–207 (AGGSKPSSGSAG), and 248–261 (TEKN…SSGS). Over residues 275–307 (ETVSNIGDTESNAGGSKSNDGANNGASGIESNA) the composition is skewed to polar residues. The segment covering 314-323 (FGAGGTGGIG) has biased composition (gly residues). Positions 343 to 358 (DGASGIGSNDGSTGTN) are enriched in low complexity. Polar residues-rich tracts occupy residues 366 to 375 (DSNIEGTENN) and 388 to 416 (IGNS…TGGK). A compositionally biased stretch (low complexity) spans 417–429 (ESNTGSESNTNSS). 2 consecutive Jacalin-type lectin domains span residues 430 to 572 (PQKL…YFVP) and 584 to 727 (PNKV…YFIP).

The protein belongs to the jacalin lectin family.

The chain is Jacalin-related lectin 5 (JAL5) from Arabidopsis thaliana (Mouse-ear cress).